The primary structure comprises 382 residues: Cytochrome b (382 aa).

4 helical membrane-spanning segments follow: residues 36–56 (FGSL…FLTM), 80–101 (WLIR…YLHI), 116–136 (WFIG…GYVL), and 181–201 (FYTF…IHLL). The heme b site is built by His-86 and His-100. His-185 and His-199 together coordinate heme b. His-204 is a binding site for a ubiquinone. Transmembrane regions (helical) follow at residues 229–249 (YKDL…TLSN), 291–311 (LGGV…PLTF), 323–343 (INQF…WIGA), and 350–370 (YIIT…LNPL).

Belongs to the cytochrome b family. In terms of assembly, the main subunits of complex b-c1 are: cytochrome b, cytochrome c1 and the Rieske protein. The cofactor is heme b.

The protein resides in the mitochondrion inner membrane. Component of the ubiquinol-cytochrome c reductase complex (complex III or cytochrome b-c1 complex) that is part of the mitochondrial respiratory chain. The b-c1 complex mediates electron transfer from ubiquinol to cytochrome c. Contributes to the generation of a proton gradient across the mitochondrial membrane that is then used for ATP synthesis. This chain is Cytochrome b (MT-CYB), found in Samia ricini (Indian eri silkmoth).